A 198-amino-acid chain; its full sequence is dTTP/UTP pyrophosphatase (198 aa).

The active-site Proton acceptor is Asp76.

It belongs to the Maf family. YhdE subfamily. The cofactor is a divalent metal cation.

Its subcellular location is the cytoplasm. The enzyme catalyses dTTP + H2O = dTMP + diphosphate + H(+). The catalysed reaction is UTP + H2O = UMP + diphosphate + H(+). In terms of biological role, nucleoside triphosphate pyrophosphatase that hydrolyzes dTTP and UTP. May have a dual role in cell division arrest and in preventing the incorporation of modified nucleotides into cellular nucleic acids. The chain is dTTP/UTP pyrophosphatase from Shewanella denitrificans (strain OS217 / ATCC BAA-1090 / DSM 15013).